A 344-amino-acid chain; its full sequence is MLLGRSAAELESWAVAQGQKPFRGRQLHDWLYAKGARSLSEITVLPKAWRESLKEDGVEVGRLKEVHRSVAADATTKLLLSTDDGETIETVGIPTDQRLTVCVSSQVGCPMACRFCATGKGGLQRSLRTHEIVDQVLSVREVMDRRPSHIVFMGMGEPLLNSQAVLDAIRCLNDDLGIGQRRITVSTVGVPKTLPQLAELALATLGRAQFTLAVSLHAPNQALREELIPTAHAYPYEALLEDCRHYLAVTGRRVSFEYILLGGLNDAPEHAAELADRVGGFQSHVNLIAYNPIEEEEFQRPTRARIEGFQRVLERRGVAVSLRASRGLDQNAACGQLRRRRQGS.

Glu-89 (proton acceptor) is an active-site residue. The region spanning 95–329 (TDQRLTVCVS…VSLRASRGLD (235 aa)) is the Radical SAM core domain. A disulfide bridge connects residues Cys-102 and Cys-334. The [4Fe-4S] cluster site is built by Cys-109, Cys-113, and Cys-116. S-adenosyl-L-methionine is bound by residues 156 to 157 (GE), Ser-186, 215 to 217 (SLH), and Asn-291. The active-site S-methylcysteine intermediate is the Cys-334.

It belongs to the radical SAM superfamily. RlmN family. [4Fe-4S] cluster is required as a cofactor.

Its subcellular location is the cytoplasm. It catalyses the reaction adenosine(2503) in 23S rRNA + 2 reduced [2Fe-2S]-[ferredoxin] + 2 S-adenosyl-L-methionine = 2-methyladenosine(2503) in 23S rRNA + 5'-deoxyadenosine + L-methionine + 2 oxidized [2Fe-2S]-[ferredoxin] + S-adenosyl-L-homocysteine. It carries out the reaction adenosine(37) in tRNA + 2 reduced [2Fe-2S]-[ferredoxin] + 2 S-adenosyl-L-methionine = 2-methyladenosine(37) in tRNA + 5'-deoxyadenosine + L-methionine + 2 oxidized [2Fe-2S]-[ferredoxin] + S-adenosyl-L-homocysteine. Specifically methylates position 2 of adenine 2503 in 23S rRNA and position 2 of adenine 37 in tRNAs. The polypeptide is Probable dual-specificity RNA methyltransferase RlmN (Parasynechococcus marenigrum (strain WH8102)).